The sequence spans 437 residues: UDP-N-acetylmuramate--L-alanine ligase (437 aa).

108-114 (GAHGKTS) contacts ATP.

Belongs to the MurCDEF family.

The protein resides in the cytoplasm. It catalyses the reaction UDP-N-acetyl-alpha-D-muramate + L-alanine + ATP = UDP-N-acetyl-alpha-D-muramoyl-L-alanine + ADP + phosphate + H(+). It functions in the pathway cell wall biogenesis; peptidoglycan biosynthesis. Functionally, cell wall formation. This is UDP-N-acetylmuramate--L-alanine ligase from Staphylococcus carnosus (strain TM300).